We begin with the raw amino-acid sequence, 217 residues long: tRNA (guanine-N(7)-)-methyltransferase (217 aa).

Positions 48, 73, 100, and 123 each coordinate S-adenosyl-L-methionine. Asp-123 is a catalytic residue. Residues Lys-127 and Asp-159 each contribute to the substrate site.

This sequence belongs to the class I-like SAM-binding methyltransferase superfamily. TrmB family.

It carries out the reaction guanosine(46) in tRNA + S-adenosyl-L-methionine = N(7)-methylguanosine(46) in tRNA + S-adenosyl-L-homocysteine. It functions in the pathway tRNA modification; N(7)-methylguanine-tRNA biosynthesis. Its function is as follows. Catalyzes the formation of N(7)-methylguanine at position 46 (m7G46) in tRNA. In Leptospira borgpetersenii serovar Hardjo-bovis (strain JB197), this protein is tRNA (guanine-N(7)-)-methyltransferase.